We begin with the raw amino-acid sequence, 141 residues long: Hemoglobin subunit alpha-1/2 (141 aa).

In terms of domain architecture, Globin spans 1 to 141 (VLSPADKTNV…VSTVLTSKYR (141 aa)). S3 is subject to Phosphoserine. K7 carries the post-translational modification N6-succinyllysine. T8 carries the post-translational modification Phosphothreonine. N6-succinyllysine is present on K11. K16 carries the post-translational modification N6-acetyllysine; alternate. Residue K16 is modified to N6-succinyllysine; alternate. A Phosphotyrosine modification is found at Y24. The residue at position 35 (S35) is a Phosphoserine. K40 is subject to N6-succinyllysine. Phosphoserine is present on S49. H58 provides a ligand contact to O2. Position 87 (H87) interacts with heme b. S102 is modified (phosphoserine). T108 is subject to Phosphothreonine. Phosphoserine occurs at positions 124 and 131. Residues T134 and T137 each carry the phosphothreonine modification. At S138 the chain carries Phosphoserine.

The protein belongs to the globin family. Heterotetramer of two alpha chains and two beta chains. In terms of tissue distribution, red blood cells.

In terms of biological role, involved in oxygen transport from the lung to the various peripheral tissues. The polypeptide is Hemoglobin subunit alpha-1/2 (Macaca sinica (Toque macaque)).